Reading from the N-terminus, the 739-residue chain is Ankyrin repeat and SAM domain-containing protein 6 (739 aa).

ANK repeat units follow at residues 1–30, 57–86, 91–120, 124–156, 158–188, 192–221, 226–255, and 259–290; these read MGAS…FVDD, LEVR…DARV, TGWS…DPDH, LGNT…RPDD, KKRP…QVDV, DGAS…DVDR, HGWT…DVQL, and NGYT…LVDK. Positions 295 to 305 are enriched in basic residues; that stretch reads QRGKSALRRRA. Disordered regions lie at residues 295–320 and 449–645; these read QRGK…TGLK and LRDA…ITDE. Residues 462 to 478 show a composition bias toward polar residues; the sequence is PGRSSAGSDTASISRVV. 2 stretches are compositionally biased toward low complexity: residues 490–506 and 582–592; these read GPSP…HSSG and SSRSKSTSPTL. A compositionally biased stretch (pro residues) spans 593 to 603; it reads TPSPSPTPAHT. Positions 604–641 are enriched in low complexity; sequence PAPAHTPAHRPTGASADSQGSASTQQRSRSSGGSSSGT. Positions 643–706 constitute an SAM domain; sequence TDEDELSGIL…LAAISELNAG (64 aa).

The protein resides in the cell projection. It is found in the cilium. In terms of biological role, required for renal function. This is Ankyrin repeat and SAM domain-containing protein 6 (anks6) from Danio rerio (Zebrafish).